Reading from the N-terminus, the 210-residue chain is Protein PF1979 (210 aa).

The AMMECR1 domain occupies 7-201 (EWGEFLVRLA…EEYPRGPVKR (195 aa)).

The sequence is that of Protein PF1979 from Pyrococcus furiosus (strain ATCC 43587 / DSM 3638 / JCM 8422 / Vc1).